Here is a 331-residue protein sequence, read N- to C-terminus: Glyceraldehyde-3-phosphate dehydrogenase (331 aa).

Residues 12–13 (RI), Asp34, Arg78, and Thr120 contribute to the NAD(+) site. D-glyceraldehyde 3-phosphate is bound by residues 149–151 (SCT), Thr180, 209–210 (TG), and Arg232. Cys150 (nucleophile) is an active-site residue. Asn314 is an NAD(+) binding site.

Belongs to the glyceraldehyde-3-phosphate dehydrogenase family. In terms of assembly, homotetramer.

The protein resides in the cytoplasm. The enzyme catalyses D-glyceraldehyde 3-phosphate + phosphate + NAD(+) = (2R)-3-phospho-glyceroyl phosphate + NADH + H(+). It participates in carbohydrate degradation; glycolysis; pyruvate from D-glyceraldehyde 3-phosphate: step 1/5. Catalyzes the oxidative phosphorylation of glyceraldehyde 3-phosphate (G3P) to 1,3-bisphosphoglycerate (BPG) using the cofactor NAD. The first reaction step involves the formation of a hemiacetal intermediate between G3P and a cysteine residue, and this hemiacetal intermediate is then oxidized to a thioester, with concomitant reduction of NAD to NADH. The reduced NADH is then exchanged with the second NAD, and the thioester is attacked by a nucleophilic inorganic phosphate to produce BPG. This chain is Glyceraldehyde-3-phosphate dehydrogenase (gapA), found in Salmonella typhi.